Reading from the N-terminus, the 495-residue chain is MWQIVFFTLSCDLVRAAAYNNFRRSMDSIGRRQYQVQHGSCSYTFLLPETDNCRSPGSYVPNAVQRDAPLDYDDSVQRLQVLENIMENNTQWLIKLENYIQDNMKKEMVEMQQNAVQNQTAVMIEIGTNLLNQTAEQTRKLTDVEAQVLNQTTRLELQLLEHSLSTNKLEKQILDQTSEINKLQDKNSFLEKKVLDMEDKHIVQLRSIKEEKDQLQVLVSKQNSIIEELEKQLVTATVNNSVLQKQQHDLMETVHSLLTMISPSKSPKDTFVAKEEQIIYRDCAEVFKSGLTTNGIYTLTFPNSTEEIKAYCDMETSGGGWTVIQRREDGSVDFQRTWKEYKVGFGNPSGEHWLGNEFVFQVTNQQPYVLKIHLKDWEGNEAYSLYEHFYLSGEELNYRIHLKGLTGTAGKISSISQPGNDFSTKDADNDKCICKCSQMLTGGWWFDACGPSNLNGMYYPQRQNTNKFNGIKWYYWKGSGYSLKGTTMMIRPADF.

The N-terminal stretch at 1–18 (MWQIVFFTLSCDLVRAAA) is a signal peptide. 6 N-linked (GlcNAc...) asparagine glycosylation sites follow: Asn88, Asn118, Asn132, Asn150, Asn239, and Asn303. Positions 165–247 (STNKLEKQIL…VNNSVLQKQQ (83 aa)) form a coiled coil. The region spanning 274–494 (KEEQIIYRDC…GTTMMIRPAD (221 aa)) is the Fibrinogen C-terminal domain. Residues Cys283 and Cys312 are joined by a disulfide bond. 4 residues coordinate Ca(2+): Asp428, Asp430, Cys432, and Cys434. Disulfide bonds link Cys432/Cys434 and Cys436/Cys449.

As to quaternary structure, interacts with TEK/TIE2, competing for the same binding site as ANGPT1. Interacts with ITGA5. Interacts with SVEP1/polydom. Interacts with THBD; this interaction significantly inhibits the generation of activated PC and TAFIa/CPB2 by the thrombin/thrombomodulin complex.

The protein localises to the secreted. In terms of biological role, binds to TEK/TIE2, competing for the ANGPT1 binding site, and modulating ANGPT1 signaling. Can induce tyrosine phosphorylation of TEK/TIE2 in the absence of ANGPT1. In the absence of angiogenic inducers, such as VEGF, ANGPT2-mediated loosening of cell-matrix contacts may induce endothelial cell apoptosis with consequent vascular regression. In concert with VEGF, it may facilitate endothelial cell migration and proliferation, thus serving as a permissive angiogenic signal. Involved in the regulation of lymphangiogenesis. The polypeptide is Angiopoietin-2 (ANGPT2) (Canis lupus familiaris (Dog)).